Reading from the N-terminus, the 295-residue chain is MNTLQSGVLVVDKPAGVTSHQVVGRVRRLMGTRKVGHAGTLDPMASGVLVVGVNRATRLLGHLSLHDKDYTATVRLGVGTVTDDAEGDVTVTTDASAIDDRAIHAAMVRQTGEIQQVPAAVSAIKVNGRRAYAKVRAGEDVVLRPRAVTVSRFEAIAIRRHGQVIDVDVEATCSSGTYVRALARDVGADLGVGGHLTALRRTRVGPFDLTAACVDIFAQDAVTPTPMTMAEAAALSFPVVHVTADQAAAIRVGRRLSFTVPAEVTAIIAETGELLALYRPDDEKDGQSRAICVLV.

The Nucleophile role is filled by Asp42.

The protein belongs to the pseudouridine synthase TruB family. Type 1 subfamily.

It carries out the reaction uridine(55) in tRNA = pseudouridine(55) in tRNA. In terms of biological role, responsible for synthesis of pseudouridine from uracil-55 in the psi GC loop of transfer RNAs. This is tRNA pseudouridine synthase B from Cutibacterium acnes (strain DSM 16379 / KPA171202) (Propionibacterium acnes).